We begin with the raw amino-acid sequence, 160 residues long: Epithelial membrane protein 1 (160 aa).

Residues 1-21 (MLVLLAGLFVVHIATAIMLFV) form a helical membrane-spanning segment. A glycan (N-linked (GlcNAc...) asparagine) is linked at N43. 3 helical membrane passes run 67–87 (FMIL…FQLF), 95–115 (FFLS…GVSI), and 137–157 (FILT…YMVL).

The protein belongs to the PMP-22/EMP/MP20 family. As to expression, most prominently found in the gastrointestinal tract, skin, lung, and brain but not in liver.

It is found in the membrane. This is Epithelial membrane protein 1 (Emp1) from Rattus norvegicus (Rat).